A 523-amino-acid polypeptide reads, in one-letter code: Leghemoglobin reductase (523 aa).

Residues 1 to 30 constitute a mitochondrion transit peptide; sequence MAMASLARRKAYAVVSSSRSSVFLTSLRGF. Residues 66-75, Lys84, Gly148, and 177-179 each bind FAD; these read EKRGTLGGTC and TGS. Cysteines 75 and 80 form a disulfide. Residues 214-221, Glu237, Val271, and Gly306 each bind NAD(+); that span reads GAGYIGLE. Residues Asp347 and 353-356 each bind FAD; that span reads MLAH. Residue His479 is the Proton acceptor of the active site.

The protein belongs to the class-I pyridine nucleotide-disulfide oxidoreductase family. As to quaternary structure, homodimer. It depends on FAD as a cofactor.

It is found in the mitochondrion. The catalysed reaction is 2 Fe(III)-[leghemoglobin] + NADH = 2 Fe(II)-[leghemoglobin] + NAD(+) + H(+). It carries out the reaction 2 Fe(III)-[leghemoglobin] + NADPH = 2 Fe(II)-[leghemoglobin] + NADP(+) + H(+). Functionally, reduces ferric leghemoglobin (Lb) to ferrous Lb. The chain is Leghemoglobin reductase (FLBR) from Vigna unguiculata (Cowpea).